We begin with the raw amino-acid sequence, 228 residues long: ATP-dependent dethiobiotin synthetase BioD (228 aa).

14–19 is a binding site for ATP; it reads DAGKTL. A Mg(2+)-binding site is contributed by T18. Residue K39 is part of the active site. ATP is bound by residues D56, 117-120, and 206-208; these read EGAG and PRL. Residues D56 and E117 each coordinate Mg(2+).

This sequence belongs to the dethiobiotin synthetase family. As to quaternary structure, homodimer. Mg(2+) is required as a cofactor.

Its subcellular location is the cytoplasm. The enzyme catalyses (7R,8S)-7,8-diammoniononanoate + CO2 + ATP = (4R,5S)-dethiobiotin + ADP + phosphate + 3 H(+). The protein operates within cofactor biosynthesis; biotin biosynthesis; biotin from 7,8-diaminononanoate: step 1/2. Catalyzes a mechanistically unusual reaction, the ATP-dependent insertion of CO2 between the N7 and N8 nitrogen atoms of 7,8-diaminopelargonic acid (DAPA, also called 7,8-diammoniononanoate) to form a ureido ring. The sequence is that of ATP-dependent dethiobiotin synthetase BioD from Cellvibrio japonicus (strain Ueda107) (Pseudomonas fluorescens subsp. cellulosa).